A 147-amino-acid polypeptide reads, in one-letter code: Austinoid biosynthesis clusters protein H (147 aa).

The protein belongs to the trt14 isomerase family. As to quaternary structure, homodimer.

It functions in the pathway secondary metabolite biosynthesis; terpenoid biosynthesis. Part of the gene cluster B that mediates the biosynthesis of the fungal meroterpenoid acetoxydehydroaustin. The first step of the pathway is the synthesis of 3,5-dimethylorsellinic acid by the polyketide synthase ausA. 3,5-dimethylorsellinic acid is then prenylated by the polyprenyl transferase ausN. Further epoxidation by the FAD-dependent monooxygenase ausM and cyclization by the probable terpene cyclase ausL lead to the formation of protoaustinoid A. Protoaustinoid A is then oxidized to spiro-lactone preaustinoid A3 by the combined action of the FAD-binding monooxygenases ausB and ausC, and the dioxygenase ausE. Acid-catalyzed keto-rearrangement and ring contraction of the tetraketide portion of preaustinoid A3 by ausJ lead to the formation of preaustinoid A4. The aldo-keto reductase ausK, with the help of ausH, is involved in the next step by transforming preaustinoid A4 into isoaustinone which is in turn hydroxylated by the P450 monooxygenase ausI to form austinolide. The cytochrome P450 monooxygenase ausG then modifies austinolide to austinol. Austinol is further acetylated to austin by the O-acetyltransferase ausP, which spontaneously changes to dehydroaustin. The cytochrome P450 monooxygenase then converts dehydroaustin is into 7-dehydrodehydroaustin. The hydroxylation catalyzed by ausR permits the second O-acetyltransferase ausQ to add an additional acetyl group to the molecule, leading to the formation of acetoxydehydroaustin. Due to genetic rearrangements of the clusters and the subsequent loss of some enzymes, the end product of the Penicillium brasilianum austinoid biosynthesis clusters is acetoxydehydroaustin. This Penicillium brasilianum protein is Austinoid biosynthesis clusters protein H.